The chain runs to 338 residues: 1-aminocyclopropane-1-carboxylate deaminase (338 aa).

K51 bears the N6-(pyridoxal phosphate)lysine mark. The Nucleophile role is filled by S78.

It belongs to the ACC deaminase/D-cysteine desulfhydrase family. Pyridoxal 5'-phosphate is required as a cofactor.

It carries out the reaction 1-aminocyclopropane-1-carboxylate + H2O = 2-oxobutanoate + NH4(+). Catalyzes a cyclopropane ring-opening reaction, the irreversible conversion of 1-aminocyclopropane-1-carboxylate (ACC) to ammonia and alpha-ketobutyrate. Allows growth on ACC as a nitrogen source. The protein is 1-aminocyclopropane-1-carboxylate deaminase of Enterobacter cloacae.